We begin with the raw amino-acid sequence, 81 residues long: Photosystem I iron-sulfur center (81 aa).

2 consecutive 4Fe-4S ferredoxin-type domains span residues 2 to 31 and 39 to 68; these read SHSV…MVPW and IASS…IRVY. [4Fe-4S] cluster is bound by residues cysteine 11, cysteine 14, cysteine 17, cysteine 21, cysteine 48, cysteine 51, cysteine 54, and cysteine 58.

The cyanobacterial PSI reaction center is composed of one copy each of PsaA,B,C,D,E,F,I,J,K,L,M and X, and forms trimeric complexes. The cofactor is [4Fe-4S] cluster.

Its subcellular location is the cellular thylakoid membrane. It catalyses the reaction reduced [plastocyanin] + hnu + oxidized [2Fe-2S]-[ferredoxin] = oxidized [plastocyanin] + reduced [2Fe-2S]-[ferredoxin]. Functionally, apoprotein for the two 4Fe-4S centers FA and FB of photosystem I (PSI); essential for photochemical activity. FB is the terminal electron acceptor of PSI, donating electrons to ferredoxin. The C-terminus interacts with PsaA/B/D and helps assemble the protein into the PSI complex. Required for binding of PsaD and PsaE to PSI. PSI is a plastocyanin/cytochrome c6-ferredoxin oxidoreductase, converting photonic excitation into a charge separation, which transfers an electron from the donor P700 chlorophyll pair to the spectroscopically characterized acceptors A0, A1, FX, FA and FB in turn. Mutant proteins with a 3Fe-4S center are unable to reconstitute PSI activity in vivo. The polypeptide is Photosystem I iron-sulfur center (Synechocystis sp. (strain ATCC 27184 / PCC 6803 / Kazusa)).